The sequence spans 87 residues: Large ribosomal subunit protein bL31B (87 aa).

This sequence belongs to the bacterial ribosomal protein bL31 family. Type B subfamily. As to quaternary structure, part of the 50S ribosomal subunit.

This chain is Large ribosomal subunit protein bL31B, found in Shigella boydii serotype 4 (strain Sb227).